Reading from the N-terminus, the 400-residue chain is Na(+)/H(+) antiporter NhaA (400 aa).

A run of 12 helical transmembrane segments spans residues 26 to 46 (AGGILLLFSAVVAMLLANSPL), 71 to 91 (LIHWINDGFMAVFFVLVGMEV), 107 to 127 (IFPAIAAIGGMVIPAVVYWFI), 137 to 157 (GWAIPMATDIAFALGIMALLS), 166 to 186 (IFLLALAIIDDLGAIVVIALF), 189 to 209 (HGLSVQALIFSAVAIIALILL), 212 to 232 (FKVSALCAYMVVGAILWASVL), 233 to 253 (KSGVHATLAGVIIGFSIPLKG), 273 to 293 (FVILPLFAFANAGVSFAGIDV), 299 to 319 (PLLLAIASGLIIGKPVGIFGF), 340 to 360 (IFAVAVLCGIGFTMSMFLASL), and 373 to 393 (LSRLGILLGSTVSAILGYLFL).

Belongs to the NhaA Na(+)/H(+) (TC 2.A.33) antiporter family.

Its subcellular location is the cell inner membrane. It carries out the reaction Na(+)(in) + 2 H(+)(out) = Na(+)(out) + 2 H(+)(in). Its function is as follows. Na(+)/H(+) antiporter that extrudes sodium in exchange for external protons. The polypeptide is Na(+)/H(+) antiporter NhaA (Haemophilus influenzae (strain PittGG)).